A 789-amino-acid chain; its full sequence is MFCKISRAPARMGSRIFTQSTLRSFSCAPVAANIDAKKVAMSNFEKNKFINYQRIKDNLEIVKKRLNRPLTYSEKILYGHLDDPVNQDIERGVSYLKLRPDRVACQDATAQMAILQFMSAGMPEVAVPVTVHCDHLIEAYEGGPIDLERANVTNKEVYDFLQTACAKYNIGFWRPGSGIIHQIVLENYAFPGGLLIGTDSHTPNAGGLGMVAIGVGGADAVDVMANLPWELKCPKVIGVKLTGQLKGWTSPKDVILKVAGILTVKGGTGAIVEYFGPGVESLSCTGMGTICNMGAEIGATTSIFPFNPRMSEYLRATNRSAIADYAEEFAPIIAADENAHYDQIIEIDLNTLEPHLNGPFTPDLATPISKFKEAVKKNDWPQELKVGLIGSCTNSSYEDMSRAASICQQAIDKGIKTKSLFTITPGSEQVRATLTRDGQLDTMRKAGGIVLANACGPCIGQWKRTDVKKGEKNSIVTSYNRNFTGRNDANPATHAFVTSPDIVTAMVFSGDMNFNPLTDTLKDKDGNDFKFEPPTGAGLPSKGYDPGSNTYVAPSSVNVKDVAIDPHSKRLQRLTPFKKWDGKDMKGLKILIKAKGKCTTDHISAAGPWLKYRGHLQNISNNYMIGAINAENGEANKLKDQLTGEYKTVPNVAIDYRDHGIRWVTLGEQNFGEGSSREHAALEPRYLGGAAVITKSFARIHETNLKKQGLLPLTFADPAAYDKISPFDTVDIDGLTTFAPGKPLTLVVHPADGSAEWSTKLNHTFNKDQIEWFKAGSALNHMANMHKQK.

A mitochondrion-targeting transit peptide spans 1-32 (MFCKISRAPARMGSRIFTQSTLRSFSCAPVAA). Substrate contacts are provided by residues glutamine 106 and 199–201 (DSH). Residues cysteine 392, cysteine 455, and cysteine 458 each contribute to the [4Fe-4S] cluster site. Substrate-binding positions include arginine 481, arginine 486, arginine 613, and 676–677 (SR).

This sequence belongs to the aconitase/IPM isomerase family. As to quaternary structure, monomer. The cofactor is [4Fe-4S] cluster.

It localises to the mitochondrion. The catalysed reaction is citrate = D-threo-isocitrate. The protein operates within carbohydrate metabolism; tricarboxylic acid cycle; isocitrate from oxaloacetate: step 2/2. Catalyzes the isomerization of citrate to isocitrate via cis-aconitate, a step in the citric acid cycle. This Schizosaccharomyces pombe (strain 972 / ATCC 24843) (Fission yeast) protein is Aconitate hydratase, mitochondrial.